The sequence spans 359 residues: tRNA/tmRNA (uracil-C(5))-methyltransferase (359 aa).

S-adenosyl-L-methionine is bound by residues Gln-183, Tyr-211, Asn-216, Glu-232, and Asp-292. The active-site Nucleophile is Cys-317. Glu-351 acts as the Proton acceptor in catalysis.

This sequence belongs to the class I-like SAM-binding methyltransferase superfamily. RNA M5U methyltransferase family. TrmA subfamily.

The enzyme catalyses uridine(54) in tRNA + S-adenosyl-L-methionine = 5-methyluridine(54) in tRNA + S-adenosyl-L-homocysteine + H(+). It carries out the reaction uridine(341) in tmRNA + S-adenosyl-L-methionine = 5-methyluridine(341) in tmRNA + S-adenosyl-L-homocysteine + H(+). Functionally, dual-specificity methyltransferase that catalyzes the formation of 5-methyluridine at position 54 (m5U54) in all tRNAs, and that of position 341 (m5U341) in tmRNA (transfer-mRNA). This chain is tRNA/tmRNA (uracil-C(5))-methyltransferase, found in Pseudomonas fluorescens (strain SBW25).